We begin with the raw amino-acid sequence, 229 residues long: Wtf element wtf14 (229 aa).

Residues 1–26 show a composition bias toward basic and acidic residues; that stretch reads MENNHHLAKDSLDELNPKRGKGEHET. The interval 1 to 27 is disordered; that stretch reads MENNHHLAKDSLDELNPKRGKGEHETQ. 4 consecutive transmembrane segments (helical) span residues 71-91, 100-120, 151-171, and 188-208; these read IPAVLLPVFVINIALFKYLVF, VLFGLGNGGINIFSMWLLLAT, LYAILKLTFVNAFAIPLLMFF, and VIGVMLNVAYFIIEIENPGLF.

It belongs to the WTF family.

The protein resides in the endoplasmic reticulum membrane. Its function is as follows. May act in meiotic drive. This chain is Wtf element wtf14, found in Schizosaccharomyces pombe (strain 972 / ATCC 24843) (Fission yeast).